We begin with the raw amino-acid sequence, 80 residues long: Sulfur carrier protein TusA (80 aa).

The active-site Cysteine persulfide intermediate is the Cys-17.

It belongs to the sulfur carrier protein TusA family.

The protein localises to the cytoplasm. Sulfur carrier protein which probably makes part of a sulfur-relay system. The polypeptide is Sulfur carrier protein TusA (Pseudomonas putida (strain ATCC 47054 / DSM 6125 / CFBP 8728 / NCIMB 11950 / KT2440)).